We begin with the raw amino-acid sequence, 221 residues long: MLFFRKRAEMPAPDQILPGRPTPLPTAERHFVNGRALKGPYPEGIETALFGLGCFWGAERKFWQLGDGIWVTAVGYAAGTTPNPTYEEVCTGLTGHNEVVLVAYDPAVLPFGQLLRTFWESHDPTQGMRQGNDVGTQYRSGLYVSDPERRAEAEASRDAYAQALRAKGFGSITTEIRDPGPFYFAEAYHQQYLAKNPAGYCGLGGTGVACPVGTGVRSAAE.

Residue C54 is part of the active site.

Belongs to the MsrA Met sulfoxide reductase family.

The catalysed reaction is L-methionyl-[protein] + [thioredoxin]-disulfide + H2O = L-methionyl-(S)-S-oxide-[protein] + [thioredoxin]-dithiol. The enzyme catalyses [thioredoxin]-disulfide + L-methionine + H2O = L-methionine (S)-S-oxide + [thioredoxin]-dithiol. Its function is as follows. Has an important function as a repair enzyme for proteins that have been inactivated by oxidation. Catalyzes the reversible oxidation-reduction of methionine sulfoxide in proteins to methionine. This is Peptide methionine sulfoxide reductase MsrA from Methylobacterium sp. (strain 4-46).